Consider the following 256-residue polypeptide: Inositol-1-monophosphatase (256 aa).

The Mg(2+) site is built by Glu60, Asp77, Leu79, and Asp80. Glu60 contributes to the substrate binding site. Residues 79–82 (LDGT), Arg178, and Asp207 contribute to the substrate site. Mg(2+) is bound at residue Asp207.

The protein belongs to the inositol monophosphatase superfamily. Mg(2+) is required as a cofactor.

It catalyses the reaction a myo-inositol phosphate + H2O = myo-inositol + phosphate. The protein is Inositol-1-monophosphatase (suhB) of Caulobacter vibrioides (strain ATCC 19089 / CIP 103742 / CB 15) (Caulobacter crescentus).